Reading from the N-terminus, the 131-residue chain is Small ribosomal subunit protein uS11 (131 aa).

It belongs to the universal ribosomal protein uS11 family. As to quaternary structure, part of the 30S ribosomal subunit. Interacts with proteins S7 and S18. Binds to IF-3.

Located on the platform of the 30S subunit, it bridges several disparate RNA helices of the 16S rRNA. Forms part of the Shine-Dalgarno cleft in the 70S ribosome. The chain is Small ribosomal subunit protein uS11 from Trichodesmium erythraeum (strain IMS101).